Here is a 613-residue protein sequence, read N- to C-terminus: DNA mismatch repair protein MutL (613 aa).

Residues E364–A393 are disordered.

This sequence belongs to the DNA mismatch repair MutL/HexB family.

Its function is as follows. This protein is involved in the repair of mismatches in DNA. It is required for dam-dependent methyl-directed DNA mismatch repair. May act as a 'molecular matchmaker', a protein that promotes the formation of a stable complex between two or more DNA-binding proteins in an ATP-dependent manner without itself being part of a final effector complex. The sequence is that of DNA mismatch repair protein MutL from Enterobacter sp. (strain 638).